The chain runs to 249 residues: MASQRISNEPAYVLHRYDWSESSLILDVFTRHHGRVALVARGAKKPSSSFRPILLPLQPLHVAFGGDAEIRNLKSAEWQGGHVMPSGDALLSGYYLNELLMRLLARDDPHPLLFDAYAATVQLLASQNPDTLQLALRAFELRLLQGIGLLPRLDAETATLTPLAPHQRYVLVAEAGLRQAHDDDRFSLSGAQWQALQQALGGKSLFSDTLQACVACANELKIQLRALLHYHCGVRVLKTRQMMMDLQAL.

It belongs to the RecO family.

Functionally, involved in DNA repair and RecF pathway recombination. The sequence is that of DNA repair protein RecO from Polaromonas naphthalenivorans (strain CJ2).